The following is a 128-amino-acid chain: Large ribosomal subunit protein bL19 (128 aa).

This sequence belongs to the bacterial ribosomal protein bL19 family.

In terms of biological role, this protein is located at the 30S-50S ribosomal subunit interface and may play a role in the structure and function of the aminoacyl-tRNA binding site. The protein is Large ribosomal subunit protein bL19 of Paraburkholderia xenovorans (strain LB400).